The primary structure comprises 206 residues: 2,3-bisphosphoglycerate-dependent phosphoglycerate mutase (206 aa).

Residues R9–N16, T22–G23, R61, E88–Y91, K99, R115–R116, and G159–N160 contribute to the substrate site. H10 acts as the Tele-phosphohistidine intermediate in catalysis. Catalysis depends on E88, which acts as the Proton donor/acceptor.

The protein belongs to the phosphoglycerate mutase family. BPG-dependent PGAM subfamily. As to quaternary structure, homodimer.

The enzyme catalyses (2R)-2-phosphoglycerate = (2R)-3-phosphoglycerate. Its pathway is carbohydrate degradation; glycolysis; pyruvate from D-glyceraldehyde 3-phosphate: step 3/5. Its function is as follows. Catalyzes the interconversion of 2-phosphoglycerate and 3-phosphoglycerate. The polypeptide is 2,3-bisphosphoglycerate-dependent phosphoglycerate mutase (Chelativorans sp. (strain BNC1)).